A 332-amino-acid polypeptide reads, in one-letter code: Glycerol-3-phosphate dehydrogenase [NAD(P)+] (332 aa).

Residues Trp13, Lys34, and Lys108 each coordinate NADPH. Residues Lys108, Gly136, and Ser138 each coordinate sn-glycerol 3-phosphate. Ala140 lines the NADPH pocket. Residues Lys191, Asp244, Ser254, Arg255, and Asn256 each coordinate sn-glycerol 3-phosphate. Catalysis depends on Lys191, which acts as the Proton acceptor. An NADPH-binding site is contributed by Arg255. NADPH-binding residues include Val279 and Glu281.

The protein belongs to the NAD-dependent glycerol-3-phosphate dehydrogenase family.

It localises to the cytoplasm. The catalysed reaction is sn-glycerol 3-phosphate + NAD(+) = dihydroxyacetone phosphate + NADH + H(+). The enzyme catalyses sn-glycerol 3-phosphate + NADP(+) = dihydroxyacetone phosphate + NADPH + H(+). It participates in membrane lipid metabolism; glycerophospholipid metabolism. In terms of biological role, catalyzes the reduction of the glycolytic intermediate dihydroxyacetone phosphate (DHAP) to sn-glycerol 3-phosphate (G3P), the key precursor for phospholipid synthesis. The protein is Glycerol-3-phosphate dehydrogenase [NAD(P)+] of Francisella tularensis subsp. mediasiatica (strain FSC147).